Here is a 287-residue protein sequence, read N- to C-terminus: Large ribosomal subunit protein uL2 (287 aa).

A disordered region spans residues 221–287 (RGSVMNPCDH…SKRSRGGRDS (67 aa)). Positions 258 to 287 (KTRKRNKPSNRFVLRKRRRVSKRSRGGRDS) are enriched in basic residues.

Belongs to the universal ribosomal protein uL2 family. Part of the 50S ribosomal subunit. Forms a bridge to the 30S subunit in the 70S ribosome.

Its function is as follows. One of the primary rRNA binding proteins. Required for association of the 30S and 50S subunits to form the 70S ribosome, for tRNA binding and peptide bond formation. It has been suggested to have peptidyltransferase activity; this is somewhat controversial. Makes several contacts with the 16S rRNA in the 70S ribosome. This chain is Large ribosomal subunit protein uL2, found in Prochlorococcus marinus (strain MIT 9211).